The following is a 493-amino-acid chain: NADH-quinone oxidoreductase subunit N 2 (493 aa).

The next 14 membrane-spanning stretches (helical) occupy residues 16-36, 45-65, 87-107, 119-139, 141-161, 176-196, 219-239, 258-278, 285-305, 313-333, 340-360, 385-405, 421-441, and 464-484; these read IIPAVMLALFGCAILLFDFLI, FLLIFVVLAEAFTGFGLFRQQ, GFAIFFNWIFLVAAVVVAIVS, GEYYSLILFAQCGMYFLATGT, LITLFIGLELMALCFYVMVGF, LLLGAFSSGFLVYGFSVMYGI, VFLALSTTSVGLLFKVSAVPF, LSVASKAASIAFLLRIFLGPL, WEPLLAFIAIITLTIGNLAAI, LLAYSSISHAGYMLLGLVAGN, IAVYVMVYTFMNLGAFLVIIA, AFLMLIFLLSLAGIPPTAGFL, GLAIVATLYVAVAIYYYFKIV, and CALALTGIATLAIGIYPEPFL.

It belongs to the complex I subunit 2 family. In terms of assembly, NDH-1 is composed of 14 different subunits. Subunits NuoA, H, J, K, L, M, N constitute the membrane sector of the complex.

Its subcellular location is the cell inner membrane. It carries out the reaction a quinone + NADH + 5 H(+)(in) = a quinol + NAD(+) + 4 H(+)(out). Functionally, NDH-1 shuttles electrons from NADH, via FMN and iron-sulfur (Fe-S) centers, to quinones in the respiratory chain. The immediate electron acceptor for the enzyme in this species is believed to be ubiquinone. Couples the redox reaction to proton translocation (for every two electrons transferred, four hydrogen ions are translocated across the cytoplasmic membrane), and thus conserves the redox energy in a proton gradient. In Solibacter usitatus (strain Ellin6076), this protein is NADH-quinone oxidoreductase subunit N 2.